A 170-amino-acid polypeptide reads, in one-letter code: MKKPTSAPRSKAFGKQRRKTREELNQEARDRKRLKKHRGHAPGSRAAGGKPASGGGNQNQQKDPRIGSKTPIPLGVTEKVTQQHKPKSEKLMLSPQAELDLLETDERLDALLERLEAGETLNAEDQAWVDAKLDRIDELMQKLGLSYDDEEDEEEDEKQEDMMRLLRGGN.

Disordered stretches follow at residues Met-1–Gln-96 and Leu-145–Asn-170. Residues Thr-20 to Asp-30 are compositionally biased toward basic and acidic residues. The span at Arg-31–His-40 shows a compositional bias: basic residues. Acidic residues predominate over residues Tyr-147–Gln-159.

Belongs to the YihI family. In terms of assembly, interacts with Der.

Functionally, a GTPase-activating protein (GAP) that modifies Der/EngA GTPase function. May play a role in ribosome biogenesis. The polypeptide is Der GTPase-activating protein YihI (Salmonella arizonae (strain ATCC BAA-731 / CDC346-86 / RSK2980)).